The chain runs to 343 residues: Ribosomal RNA small subunit methyltransferase C (343 aa).

The protein belongs to the methyltransferase superfamily. RsmC family. As to quaternary structure, monomer.

The protein localises to the cytoplasm. It carries out the reaction guanosine(1207) in 16S rRNA + S-adenosyl-L-methionine = N(2)-methylguanosine(1207) in 16S rRNA + S-adenosyl-L-homocysteine + H(+). In terms of biological role, specifically methylates the guanine in position 1207 of 16S rRNA in the 30S particle. The sequence is that of Ribosomal RNA small subunit methyltransferase C from Shigella boydii serotype 4 (strain Sb227).